The following is a 321-amino-acid chain: Probable nucleosome assembly protein (321 aa).

The segment covering 272–298 has biased composition (acidic residues); it reads EENDYDFGEDFEDEEGEDDDEEDDEEE. Residues 272–321 form a disordered region; that stretch reads EENDYDFGEDFEDEEGEDDDEEDDEEEQTIKKPSGKGKAQPQQPQDCKQQ. Over residues 311–321 the composition is skewed to low complexity; it reads QPQQPQDCKQQ.

It belongs to the nucleosome assembly protein (NAP) family.

The protein localises to the nucleus. Functionally, may modulate chromatin structure by regulation of histone octamer formation. This Dictyostelium discoideum (Social amoeba) protein is Probable nucleosome assembly protein (nap1).